The primary structure comprises 938 residues: Translation initiation factor IF-2 (938 aa).

The segment at 55 to 322 (KAEASAAPAA…RKSKRARRQE (268 aa)) is disordered. 2 stretches are compositionally biased toward low complexity: residues 57–68 (EASAAPAAPAEK) and 77–117 (KKAA…AAAP). The segment covering 118–136 (KPGPKPAPVAEQPAPPAEP) has biased composition (pro residues). 3 stretches are compositionally biased toward low complexity: residues 141 to 153 (APEA…APAA), 180 to 198 (GMGR…AGDN), and 224 to 233 (MMPKSPSAFG). The span at 247–293 (PGRGGAPGRGGAPGRGGVGTGAPGRGGAPGGGFGPSGGGRPGGGRPG) shows a compositional bias: gly residues. Residues 310–319 (RRGRKSKRAR) show a composition bias toward basic residues. One can recognise a tr-type G domain in the interval 431 to 603 (ARPPVVTVMG…VVLTADASLD (173 aa)). Residues 440-447 (GHVDHGKT) form a G1 region. 440–447 (GHVDHGKT) provides a ligand contact to GTP. Positions 465–469 (GITQH) are G2. The tract at residues 490–493 (DTPG) is G3. GTP-binding positions include 490-494 (DTPGH) and 544-547 (NKID). Residues 544 to 547 (NKID) are G4. The G5 stretch occupies residues 580-582 (SAK).

It belongs to the TRAFAC class translation factor GTPase superfamily. Classic translation factor GTPase family. IF-2 subfamily.

The protein localises to the cytoplasm. Functionally, one of the essential components for the initiation of protein synthesis. Protects formylmethionyl-tRNA from spontaneous hydrolysis and promotes its binding to the 30S ribosomal subunits. Also involved in the hydrolysis of GTP during the formation of the 70S ribosomal complex. The polypeptide is Translation initiation factor IF-2 (Nocardioides sp. (strain ATCC BAA-499 / JS614)).